The following is a 525-amino-acid chain: Neutrophil cytosol factor 2 (525 aa).

3 TPR repeats span residues 37 to 70 (SRIC…DKHS), 71 to 104 (AVAY…LRGN), and 121 to 154 (CEVL…KSEP). Thr-233 carries the phosphothreonine modification. An SH3 1 domain is found at 240-299 (LEGEAHRVLFGFVPETPEELQVMPGNIVFVLKKGSDNWATVMFNGQKGLVPCNYLEPVEL). The tract at residues 304–343 (QSQPQEDTSPESDIPPPPNSSPPGRLQLSPGHKQKEPKEL) is disordered. Ser-324 and Ser-398 each carry phosphoserine. Positions 350-428 (PYMLKVHYKY…YCLTLWCEHT (79 aa)) constitute a PB1 domain. Residues 437-457 (EPIQRENSDASKQTTEPQPKE) are disordered. Positions 456-515 (KEGTQVVAIFSYEAAQPEDLEFVEGDVILVLSHVNEEWLEGECKGKVGIFPKAFVEGCAA) constitute an SH3 2 domain.

This sequence belongs to the NCF2/NOXA1 family. As to quaternary structure, component of the phagocyte NADPH oxidase complex composed of an obligatory core heterodimer formed by the membrane proteins CYBA and CYBB and the cytosolic regulatory subunits NCF1/p47-phox, NCF2/p67-phox, NCF4/p40-phox and the small GTPase RAC1 or RAC2. Part of a cytosolic complex composed at least by NCF1, NCF2 and NCF4. Interacts with NCF4. Interacts (via the C-terminal SH3 domain) with NCF1 (via C-terminus). Interacts with SYTL1 and RAC1. May interact with NOXO1. Interacts with S100A8 and calprotectin (S100A8/9). Interacts with GBP7 (via GB1/RHD3-type G domain). Interacts with CYBB; the interaction is enhanced in the presence of GBP7.

The protein resides in the cytoplasm. NCF2, NCF1, and a membrane bound cytochrome b558 are required for activation of the latent NADPH oxidase (necessary for superoxide production). In terms of biological role, subunit of the phagocyte NADPH oxidase complex that mediates the transfer of electrons from cytosolic NADPH to O2 to produce the superoxide anion (O2(-)). In the activated complex, electrons are first transferred from NADPH to flavin adenine dinucleotide (FAD) and subsequently transferred via two heme molecules to molecular oxygen, producing superoxide through an outer-sphere reaction. Activation of the NADPH oxidase complex is initiated by the assembly of cytosolic subunits of the NADPH oxidase complex with the core NADPH oxidase complex to form a complex at the plasma membrane or phagosomal membrane. This activation process is initiated by phosphorylation dependent binding of the cytosolic NCF1/p47-phox subunit to the C-terminus of CYBA/p22-phox. This chain is Neutrophil cytosol factor 2, found in Mus musculus (Mouse).